Consider the following 358-residue polypeptide: MLKTPLYESHLAANAKMVDFSGWSMPINYGSQIQEHNNVRENCGVFDVSHMLAVDIQGKDAEKFLRHILANDVAKLEAGKAQYGCMLNHEAGIVDDLITYKIDSENFRIVVNAGNRESDVAWFRENSQDLDVKITPQQNLAIVAVQGPKAVEIVKHTVTTEVAEEIAKLKPFTFKFFSNWMFARTGYTGEDGFEIMLPADQVADFWDNLLENGAEPAGLGARDTLRLEAGMHLYGSDMNTTTTPLERGLGWSVDLSDENRDFIGKKAYLTKKSHGITTKWTGVVLKSKGVLRAGQEIDFDNGEKGYITSGSFSPTLKVAIALAYVPKEGANPIVNIRGKELEVELVKAKFVKNGQSLI.

The protein belongs to the GcvT family. The glycine cleavage system is composed of four proteins: P, T, L and H.

It carries out the reaction N(6)-[(R)-S(8)-aminomethyldihydrolipoyl]-L-lysyl-[protein] + (6S)-5,6,7,8-tetrahydrofolate = N(6)-[(R)-dihydrolipoyl]-L-lysyl-[protein] + (6R)-5,10-methylene-5,6,7,8-tetrahydrofolate + NH4(+). In terms of biological role, the glycine cleavage system catalyzes the degradation of glycine. The chain is Aminomethyltransferase from Francisella philomiragia subsp. philomiragia (strain ATCC 25017 / CCUG 19701 / FSC 153 / O#319-036).